The primary structure comprises 506 residues: GMP synthase [glutamine-hydrolyzing] (506 aa).

Positions 4–192 (KLIILDFGSQ…FLDICGMKRD (189 aa)) constitute a Glutamine amidotransferase type-1 domain. The active-site Nucleophile is the Cys79. Catalysis depends on residues His167 and Glu169. The GMPS ATP-PPase domain maps to 193–381 (WTPASFIEAT…LGMMPHLIHR (189 aa)). 220–226 (SGGVDSS) contacts ATP.

In terms of assembly, homodimer.

The enzyme catalyses XMP + L-glutamine + ATP + H2O = GMP + L-glutamate + AMP + diphosphate + 2 H(+). The protein operates within purine metabolism; GMP biosynthesis; GMP from XMP (L-Gln route): step 1/1. Functionally, catalyzes the synthesis of GMP from XMP. This chain is GMP synthase [glutamine-hydrolyzing], found in Porphyromonas gingivalis (strain ATCC BAA-308 / W83).